Here is a 190-residue protein sequence, read N- to C-terminus: Peptidyl-tRNA hydrolase (190 aa).

Tyrosine 14 provides a ligand contact to tRNA. The active-site Proton acceptor is histidine 19. Tyrosine 64, asparagine 66, and asparagine 112 together coordinate tRNA.

It belongs to the PTH family. Monomer.

The protein localises to the cytoplasm. It catalyses the reaction an N-acyl-L-alpha-aminoacyl-tRNA + H2O = an N-acyl-L-amino acid + a tRNA + H(+). Functionally, hydrolyzes ribosome-free peptidyl-tRNAs (with 1 or more amino acids incorporated), which drop off the ribosome during protein synthesis, or as a result of ribosome stalling. In terms of biological role, catalyzes the release of premature peptidyl moieties from peptidyl-tRNA molecules trapped in stalled 50S ribosomal subunits, and thus maintains levels of free tRNAs and 50S ribosomes. The chain is Peptidyl-tRNA hydrolase from Chlorobium chlorochromatii (strain CaD3).